The sequence spans 126 residues: UPF0102 protein DNO_0639 (126 aa).

It belongs to the UPF0102 family.

This is UPF0102 protein DNO_0639 from Dichelobacter nodosus (strain VCS1703A).